A 95-amino-acid chain; its full sequence is Aspartyl/glutamyl-tRNA(Asn/Gln) amidotransferase subunit C (95 aa).

The protein belongs to the GatC family. Heterotrimer of A, B and C subunits.

The enzyme catalyses L-glutamyl-tRNA(Gln) + L-glutamine + ATP + H2O = L-glutaminyl-tRNA(Gln) + L-glutamate + ADP + phosphate + H(+). It carries out the reaction L-aspartyl-tRNA(Asn) + L-glutamine + ATP + H2O = L-asparaginyl-tRNA(Asn) + L-glutamate + ADP + phosphate + 2 H(+). Allows the formation of correctly charged Asn-tRNA(Asn) or Gln-tRNA(Gln) through the transamidation of misacylated Asp-tRNA(Asn) or Glu-tRNA(Gln) in organisms which lack either or both of asparaginyl-tRNA or glutaminyl-tRNA synthetases. The reaction takes place in the presence of glutamine and ATP through an activated phospho-Asp-tRNA(Asn) or phospho-Glu-tRNA(Gln). The protein is Aspartyl/glutamyl-tRNA(Asn/Gln) amidotransferase subunit C of Acetivibrio thermocellus (strain ATCC 27405 / DSM 1237 / JCM 9322 / NBRC 103400 / NCIMB 10682 / NRRL B-4536 / VPI 7372) (Clostridium thermocellum).